The sequence spans 249 residues: 23S rRNA (guanosine-2'-O-)-methyltransferase RlmB (249 aa).

S-adenosyl-L-methionine contacts are provided by Gly200, Ile220, and Leu229.

It belongs to the class IV-like SAM-binding methyltransferase superfamily. RNA methyltransferase TrmH family. RlmB subfamily.

It is found in the cytoplasm. The enzyme catalyses guanosine(2251) in 23S rRNA + S-adenosyl-L-methionine = 2'-O-methylguanosine(2251) in 23S rRNA + S-adenosyl-L-homocysteine + H(+). In terms of biological role, specifically methylates the ribose of guanosine 2251 in 23S rRNA. The polypeptide is 23S rRNA (guanosine-2'-O-)-methyltransferase RlmB (Xanthomonas axonopodis pv. citri (strain 306)).